A 673-amino-acid polypeptide reads, in one-letter code: DNA ligase (673 aa).

NAD(+) is bound by residues 38-42 (DSVYD), 87-88 (SL), and glutamate 119. The active-site N6-AMP-lysine intermediate is the lysine 121. The NAD(+) site is built by arginine 142, glutamate 179, lysine 296, and lysine 320. The Zn(2+) site is built by cysteine 414, cysteine 417, cysteine 432, and cysteine 438. The region spanning 595 to 673 (VVKSEIAGKT…EEAFLKLLKS (79 aa)) is the BRCT domain.

The protein belongs to the NAD-dependent DNA ligase family. LigA subfamily. Mg(2+) serves as cofactor. Mn(2+) is required as a cofactor.

It catalyses the reaction NAD(+) + (deoxyribonucleotide)n-3'-hydroxyl + 5'-phospho-(deoxyribonucleotide)m = (deoxyribonucleotide)n+m + AMP + beta-nicotinamide D-nucleotide.. Its function is as follows. DNA ligase that catalyzes the formation of phosphodiester linkages between 5'-phosphoryl and 3'-hydroxyl groups in double-stranded DNA using NAD as a coenzyme and as the energy source for the reaction. It is essential for DNA replication and repair of damaged DNA. The protein is DNA ligase of Coxiella burnetii (strain CbuK_Q154) (Coxiella burnetii (strain Q154)).